Reading from the N-terminus, the 528-residue chain is J domain-containing protein APJ1 (528 aa).

Residues 4-73 (NTSLYDSLNV…RALYDQYGTT (70 aa)) enclose the J domain. A CR-type zinc finger spans residues 193-274 (GKTAKLGLNR…CQGLGFIKER (82 aa)). CXXCXGXG motif repeat units lie at residues 206 to 213 (CSVCDGHG), 218 to 225 (CTCKTCKG), 246 to 253 (CADCGGAG), and 262 to 269 (CQQCQGLG). The segment covering 485–499 (NERDSRKRNNRRFDE) has biased composition (basic and acidic residues). The segment at 485-528 (NERDSRKRNNRRFDESNINNNNETKRNKYSSPVSGFYDHDINGY) is disordered.

Its subcellular location is the cytoplasm. The protein localises to the nucleus. In terms of biological role, putative chaperone involved in protein folding. Interferes with propagation of [PSI+] prion when overproduced. The sequence is that of J domain-containing protein APJ1 (APJ1) from Saccharomyces cerevisiae (strain ATCC 204508 / S288c) (Baker's yeast).